We begin with the raw amino-acid sequence, 2025 residues long: E3 ubiquitin-protein ligase TRIP12 (2025 aa).

The segment covering 1 to 10 (MSNRPNNNPG) has biased composition (polar residues). The tract at residues 1 to 404 (MSNRPNNNPG…SGESESDDSE (404 aa)) is disordered. An N-acetylserine modification is found at Ser2. A Phosphoserine modification is found at Ser12. Residues 18-27 (RNTAGAQPQD) show a composition bias toward polar residues. Basic and acidic residues predominate over residues 48–70 (DPDRANTSERQKTGQVPKKDNSR). Ser77, Ser85, and Ser100 each carry phosphoserine. Polar residues-rich tracts occupy residues 78 to 88 (PDYNRTNSPSS), 99 to 108 (ESLSETNKPP), and 119 to 132 (EQQLKSAQLPSTSK). Low complexity-rich tracts occupy residues 154 to 166 (SSCVKSGSGSEST) and 175 to 216 (PTKL…SSTV). Lys181 bears the N6-acetyllysine mark. The segment covering 280–290 (PGSSKSETSKP) has biased composition (polar residues). 2 positions are modified to phosphoserine: Ser310 and Ser312. A compositionally biased stretch (polar residues) spans 326 to 338 (QKTTGSCASTSRR). Basic and acidic residues predominate over residues 346–358 (GAAEARRQEKMAD). The segment covering 362–371 (NQETVNSSAA) has biased composition (polar residues). The span at 379 to 397 (GAAASSSVAGAVGMTTSGE) shows a compositional bias: low complexity. A WWE domain is found at 755-869 (MLKKGNAQNT…DPELAKSFIK (115 aa)). Positions 970–1077 (ESLLTSPPKA…QSPKSSFLAS (108 aa)) are disordered. The residue at position 975 (Ser975) is a Phosphoserine. Residues 983–1006 (GSGSLGSTTPASSGTATAATNASA) show a composition bias toward low complexity. A phosphoserine mark is found at Ser1024 and Ser1030. Residues 1034-1047 (KRKRLPKRGPRRPK) show a composition bias toward basic residues. Ser1049 is modified (phosphoserine). A compositionally biased stretch (basic and acidic residues) spans 1050–1059 (PPRDDDKVDN). Residues 1062 to 1073 (KSPTTTQSPKSS) show a composition bias toward low complexity. A phosphoserine mark is found at Ser1063, Ser1350, Ser1355, Ser1362, and Ser1409. Phosphothreonine is present on Thr1410. 2 disordered regions span residues 1440 to 1466 (SSKDCVGGKRGRAQTAPTKTSPRNAKK) and 1601 to 1620 (TNPEINQSDSQDSRVAPRLD). Lys1458 bears the N6-acetyllysine mark. Residue Ser1460 is modified to Phosphoserine. Positions 1529 to 1603 (EIIPTSEFIN…AMQRLLDTNP (75 aa)) are K-box. The 108-residue stretch at 1918 to 2025 (PDHGYTHDSR…REGQQSFHLS (108 aa)) folds into the HECT domain. Residue Cys1992 is the Glycyl thioester intermediate of the active site.

Belongs to the UPL family. K-HECT subfamily. In terms of assembly, interacts with MYC; leading to disrupt interaction with isoform p19ARF/ARF of CDKN2A. Interacts with TRADD; leading to disrupt interaction with isoform p19ARF/ARF of CDKN2A. Interacts with SMARCC1; leading to disrupt interaction with SMARCE1.

It is found in the nucleus. The protein localises to the nucleoplasm. The enzyme catalyses S-ubiquitinyl-[E2 ubiquitin-conjugating enzyme]-L-cysteine + [acceptor protein]-L-lysine = [E2 ubiquitin-conjugating enzyme]-L-cysteine + N(6)-ubiquitinyl-[acceptor protein]-L-lysine.. It participates in protein modification; protein ubiquitination. E3 ubiquitin-protein ligase involved in ubiquitin fusion degradation (UFD) pathway and regulation of DNA repair. Part of the ubiquitin fusion degradation (UFD) pathway, a process that mediates ubiquitination of protein at their N-terminus, regardless of the presence of lysine residues in target proteins. Acts as a key regulator of DNA damage response by acting as a suppressor of RNF168, an E3 ubiquitin-protein ligase that promotes accumulation of 'Lys-63'-linked histone H2A and H2AX at DNA damage sites, thereby acting as a guard against excessive spreading of ubiquitinated chromatin at damaged chromosomes. In normal cells, mediates ubiquitination and degradation of isoform p19ARF/ARF of CDKN2A, a lysine-less tumor suppressor required for p53/TP53 activation under oncogenic stress. In cancer cells, however, isoform p19ARF/ARF and TRIP12 are located in different cell compartments, preventing isoform p19ARF/ARF ubiquitination and degradation. Does not mediate ubiquitination of isoform p16-INK4a of CDKN2A. Also catalyzes ubiquitination of NAE1 and SMARCE1, leading to their degradation. Ubiquitination and degradation of target proteins is regulated by interaction with proteins such as MYC, TRADD or SMARCC1, which disrupt the interaction between TRIP12 and target proteins. Mediates ubiquitination of ASXL1: following binding to N(6)-methyladenosine methylated DNA, ASXL1 is ubiquitinated by TRIP12, leading to its degradation and subsequent inactivation of the PR-DUB complex. The sequence is that of E3 ubiquitin-protein ligase TRIP12 (Trip12) from Rattus norvegicus (Rat).